A 179-amino-acid chain; its full sequence is Large ribosomal subunit protein uL5 (179 aa).

It belongs to the universal ribosomal protein uL5 family. In terms of assembly, part of the 50S ribosomal subunit; part of the 5S rRNA/L5/L18/L25 subcomplex. Contacts the 5S rRNA and the P site tRNA. Forms a bridge to the 30S subunit in the 70S ribosome.

In terms of biological role, this is one of the proteins that bind and probably mediate the attachment of the 5S RNA into the large ribosomal subunit, where it forms part of the central protuberance. In the 70S ribosome it contacts protein S13 of the 30S subunit (bridge B1b), connecting the 2 subunits; this bridge is implicated in subunit movement. Contacts the P site tRNA; the 5S rRNA and some of its associated proteins might help stabilize positioning of ribosome-bound tRNAs. The protein is Large ribosomal subunit protein uL5 of Francisella tularensis subsp. novicida (strain U112).